A 301-amino-acid polypeptide reads, in one-letter code: POU domain, class 6, transcription factor 1 (301 aa).

Repeat copies occupy residues 11 to 17 (NAQGQVI) and 50 to 56 (NAQGQVI). The interval 11-56 (NAQGQVIGALPWVVNSASVATPAPAQSLQVQAVTPQLLLNAQGQVI) is 2 X 7 AA repeats of N-A-Q-G-Q-V-I. The interval 66 to 88 (QPVAVRKPSTPESPAKSEVQPIQ) is disordered. One can recognise a POU-specific domain in the interval 139-213 (EDGINLEEIR…VLEKWLNEAE (75 aa)). A DNA-binding region (homeobox) is located at residues 234 to 293 (KRKRRTSFTPQAIEALNAYFEKNPLPTGQEITEIAKELNYDREVVRVWFCNRRQTLKNTS).

Belongs to the POU transcription factor family. Class-6 subfamily. In the embryo, widely expressed, with highest levels in the developing brain and spinal cord. In the adult, mostly found in the brain, where it is diffusely expressed with the exception of an enrichment in layer IV of the neocortex. Also found in kidney, lung, heart, adrenal, skin, and placenta. Low levels in spleen, muscle, liver, anterior pituitary, testis and ovary.

The protein localises to the nucleus. In terms of biological role, transcription factor that binds preferentially to a variant of the octamer motif (5'-ATGATAAT-3'). This Rattus norvegicus (Rat) protein is POU domain, class 6, transcription factor 1 (Pou6f1).